The chain runs to 118 residues: Acidic phospholipase A2 CM-I (118 aa).

Disulfide bonds link Cys-11/Cys-70, Cys-26/Cys-117, Cys-28/Cys-44, Cys-43/Cys-98, Cys-50/Cys-91, Cys-59/Cys-84, and Cys-77/Cys-89. Ca(2+)-binding residues include Tyr-27, Gly-29, and Gly-31. Residue His-47 is part of the active site. Asp-48 contributes to the Ca(2+) binding site. The active site involves Asp-92.

The protein belongs to the phospholipase A2 family. Group I subfamily. D49 sub-subfamily. Ca(2+) serves as cofactor. As to expression, expressed by the venom gland.

It localises to the secreted. It carries out the reaction a 1,2-diacyl-sn-glycero-3-phosphocholine + H2O = a 1-acyl-sn-glycero-3-phosphocholine + a fatty acid + H(+). In terms of biological role, snake venom phospholipase A2 (PLA2) that causes myonecrosis when injected intramuscularly, shows indirect hemolytic activity, abolishes twitches evoked by indirect stimulation earlier than those by direct stimulation (in the mouse phrenic nerve-diaphragm preparation) but does not produce complete neuromuscular block (up to 30 ug/ml) (in the chick biventer cervicis nerve-muscle preparation). PLA2 catalyzes the calcium-dependent hydrolysis of the 2-acyl groups in 3-sn-phosphoglycerides. The sequence is that of Acidic phospholipase A2 CM-I from Naja mossambica (Mozambique spitting cobra).